We begin with the raw amino-acid sequence, 305 residues long: Sulfate adenylyltransferase subunit 2 (305 aa).

This sequence belongs to the PAPS reductase family. CysD subfamily. Heterodimer composed of CysD, the smaller subunit, and CysN.

The enzyme catalyses sulfate + ATP + H(+) = adenosine 5'-phosphosulfate + diphosphate. Its pathway is sulfur metabolism; hydrogen sulfide biosynthesis; sulfite from sulfate: step 1/3. With CysN forms the ATP sulfurylase (ATPS) that catalyzes the adenylation of sulfate producing adenosine 5'-phosphosulfate (APS) and diphosphate, the first enzymatic step in sulfur assimilation pathway. APS synthesis involves the formation of a high-energy phosphoric-sulfuric acid anhydride bond driven by GTP hydrolysis by CysN coupled to ATP hydrolysis by CysD. The sequence is that of Sulfate adenylyltransferase subunit 2 from Azotobacter vinelandii (strain DJ / ATCC BAA-1303).